We begin with the raw amino-acid sequence, 264 residues long: Indole-3-glycerol phosphate synthase (264 aa).

Belongs to the TrpC family.

The enzyme catalyses 1-(2-carboxyphenylamino)-1-deoxy-D-ribulose 5-phosphate + H(+) = (1S,2R)-1-C-(indol-3-yl)glycerol 3-phosphate + CO2 + H2O. The protein operates within amino-acid biosynthesis; L-tryptophan biosynthesis; L-tryptophan from chorismate: step 4/5. This chain is Indole-3-glycerol phosphate synthase, found in Xylella fastidiosa (strain M23).